Reading from the N-terminus, the 212-residue chain is Methylthioribulose-1-phosphate dehydratase (212 aa).

The Zn(2+) site is built by His-97 and His-99.

It belongs to the aldolase class II family. MtnB subfamily. In terms of assembly, homotetramer. Zn(2+) is required as a cofactor.

The enzyme catalyses 5-(methylsulfanyl)-D-ribulose 1-phosphate = 5-methylsulfanyl-2,3-dioxopentyl phosphate + H2O. It functions in the pathway amino-acid biosynthesis; L-methionine biosynthesis via salvage pathway; L-methionine from S-methyl-5-thio-alpha-D-ribose 1-phosphate: step 2/6. In terms of biological role, catalyzes the dehydration of methylthioribulose-1-phosphate (MTRu-1-P) into 2,3-diketo-5-methylthiopentyl-1-phosphate (DK-MTP-1-P). The polypeptide is Methylthioribulose-1-phosphate dehydratase (Bacillus thuringiensis subsp. konkukian (strain 97-27)).